Here is a 538-residue protein sequence, read N- to C-terminus: Inositol-3-phosphate synthase (538 aa).

Residues glycine 74, glycine 75, asparagine 76, asparagine 77, aspartate 150, serine 186, valine 187, glutamine 197, aspartate 198, arginine 200, threonine 247, alanine 248, asparagine 249, threonine 250, glycine 298, serine 299, aspartate 323, serine 326, asparagine 357, asparagine 358, aspartate 359, lysine 372, glycine 412, aspartate 413, aspartate 441, and serine 442 each coordinate NAD(+).

This sequence belongs to the myo-inositol 1-phosphate synthase family. As to quaternary structure, homotetramer. The cofactor is NAD(+).

The protein resides in the cytoplasm. It catalyses the reaction D-glucose 6-phosphate = 1D-myo-inositol 3-phosphate. Its pathway is polyol metabolism; myo-inositol biosynthesis; myo-inositol from D-glucose 6-phosphate: step 1/2. Key enzyme in myo-inositol biosynthesis pathway that catalyzes the conversion of glucose 6-phosphate to 1-myo-inositol 1-phosphate in a NAD-dependent manner. Rate-limiting enzyme in the synthesis of all inositol-containing compounds. This Candida glabrata (strain ATCC 2001 / BCRC 20586 / JCM 3761 / NBRC 0622 / NRRL Y-65 / CBS 138) (Yeast) protein is Inositol-3-phosphate synthase (INO1).